Here is a 324-residue protein sequence, read N- to C-terminus: HSF-like protein (324 aa).

The N-terminal stretch at 1 to 19 is a signal peptide; it reads MNSLVALVLLGQIIGSTVS. Cystatin fetuin-A-type domains are found at residues 21 to 130 and 141 to 254; these read QLGP…VKCS and RDCP…SDCV. 6 disulfides stabilise this stretch: cysteine 28–cysteine 315, cysteine 85–cysteine 96, cysteine 110–cysteine 129, cysteine 143–cysteine 146, cysteine 205–cysteine 217, and cysteine 230–cysteine 253. An N-linked (GlcNAc...) asparagine glycan is attached at asparagine 95. N-linked (GlcNAc...) asparagine glycosylation occurs at asparagine 204. Asparagine 282 carries an N-linked (GlcNAc...) asparagine glycan.

This sequence belongs to the fetuin family. As to quaternary structure, homodimer. Expressed by the liver.

The protein localises to the secreted. Its function is as follows. May not have antihemorrhagic activity. The polypeptide is HSF-like protein (Protobothrops flavoviridis (Habu)).